The chain runs to 109 residues: RYamide neuropeptides (109 aa).

The first 22 residues, 1-22 (MNECVNKLLHLKFLFYFILGIQ), serve as a signal peptide directing secretion. Y33 is subject to Tyrosine amide. Residues 36 to 53 (STTYDESLKSRRIFIVPR) constitute a propeptide that is removed on maturation. Y63 bears the Tyrosine amide mark. A propeptide spanning residues 67–109 (SGKYLCLSREINKLIVRKRLRNNDKERTPTLSFITKHFLMRNT) is cleaved from the precursor.

It localises to the secreted. Neuropeptides RYamide-1 and RYamide-2 are ligands for the G-protein coupled receptor RYa-R. May suppress feeding behavior. The chain is RYamide neuropeptides from Drosophila melanogaster (Fruit fly).